Here is a 193-residue protein sequence, read N- to C-terminus: dCTP deaminase (193 aa).

DCTP-binding positions include 110 to 115 (RSSLAR), D128, 136 to 138 (VLE), Y171, K178, and Q182. Catalysis depends on E138, which acts as the Proton donor/acceptor. The tract at residues 169-193 (RPYNSRQDAKYRGQQGAVASRIDKD) is disordered.

It belongs to the dCTP deaminase family. Homotrimer.

It catalyses the reaction dCTP + H2O + H(+) = dUTP + NH4(+). It functions in the pathway pyrimidine metabolism; dUMP biosynthesis; dUMP from dCTP (dUTP route): step 1/2. Its function is as follows. Catalyzes the deamination of dCTP to dUTP. In Yersinia pestis bv. Antiqua (strain Antiqua), this protein is dCTP deaminase.